Reading from the N-terminus, the 49-residue chain is L-amino-acid oxidase (49 aa).

43–44 is a binding site for FAD; the sequence is MS.

It belongs to the flavin monoamine oxidase family. FIG1 subfamily. In terms of assembly, homodimer; non-covalently linked. FAD is required as a cofactor. In terms of processing, N-glycosylated. As to expression, expressed by the venom gland.

The protein resides in the secreted. It carries out the reaction an L-alpha-amino acid + O2 + H2O = a 2-oxocarboxylate + H2O2 + NH4(+). The catalysed reaction is L-leucine + O2 + H2O = 4-methyl-2-oxopentanoate + H2O2 + NH4(+). In terms of biological role, catalyzes an oxidative deamination of predominantly hydrophobic and aromatic L-amino acids, thus producing hydrogen peroxide that may contribute to the diverse toxic effects of this enzyme. Shows activity on L-Leu. Exhibits diverse biological activities, such as hemorrhage, hemolysis, edema, antibacterial and antiparasitic activities, as well as regulation of platelet aggregation. Its effect on platelets is controversial, since it either induces aggregation or inhibits agonist-induced aggregation. These different effects are probably due to different experimental conditions. In addition, this protein induces apoptosis and necrosis and has inhibitory effects on rat kidney function (decrease of blood flow and glomerular filtration). The protein is L-amino-acid oxidase of Bothrops insularis (Golden lancehead).